A 131-amino-acid chain; its full sequence is (R)-mandelonitrile lyase (131 aa).

A Cupin type-2 domain is found at 42-104; the sequence is VTFEPGARTA…WHGAAPTTAM (63 aa). Positions 53, 55, 59, 94, and 96 each coordinate Mn(2+).

This sequence belongs to the cupin domain-containing hydroxynitrile lyase family. Requires Mn(2+) as cofactor.

The enzyme catalyses (R)-mandelonitrile = benzaldehyde + hydrogen cyanide. Its function is as follows. Hydroxynitrile lyase which catalyzes mandelonitrile formation from benzaldehyde and hydrogen cyanide with high stereoselectivity in presence of manganese. The polypeptide is (R)-mandelonitrile lyase (Granulicella tundricola (strain ATCC BAA-1859 / DSM 23138 / MP5ACTX9)).